A 380-amino-acid polypeptide reads, in one-letter code: Cystathionine gamma-synthase (380 aa).

N6-(pyridoxal phosphate)lysine is present on Lys-195.

The protein belongs to the trans-sulfuration enzymes family. As to quaternary structure, homotetramer. The cofactor is pyridoxal 5'-phosphate.

It localises to the cytoplasm. The catalysed reaction is O-succinyl-L-homoserine + L-cysteine = L,L-cystathionine + succinate + H(+). Catalyzes the formation of L-cystathionine from O-succinyl-L-homoserine (OSHS) and L-cysteine, via a gamma-replacement reaction. In the absence of thiol, catalyzes gamma-elimination to form 2-oxobutanoate, succinate and ammonia. The protein is Cystathionine gamma-synthase (metB) of Helicobacter pylori (strain J99 / ATCC 700824) (Campylobacter pylori J99).